The following is a 263-amino-acid chain: Hydroxyacylglutathione hydrolase (263 aa).

Zn(2+) is bound by residues histidine 55, histidine 57, aspartate 59, histidine 60, histidine 117, aspartate 134, and histidine 172.

It belongs to the metallo-beta-lactamase superfamily. Glyoxalase II family. As to quaternary structure, monomer. It depends on Zn(2+) as a cofactor.

It catalyses the reaction an S-(2-hydroxyacyl)glutathione + H2O = a 2-hydroxy carboxylate + glutathione + H(+). The protein operates within secondary metabolite metabolism; methylglyoxal degradation; (R)-lactate from methylglyoxal: step 2/2. Its function is as follows. Thiolesterase that catalyzes the hydrolysis of S-D-lactoyl-glutathione to form glutathione and D-lactic acid. This chain is Hydroxyacylglutathione hydrolase, found in Shewanella baltica (strain OS223).